Consider the following 197-residue polypeptide: MAASPKINRREHILQCLATMLETSPGQRITTAKLAAEVGVSEAALYRHFPSKARMFEGLIEFIEESLLSRINLIMDEEKDTMKRCQQLLQLLLVFAERNPGISRVLNGDALLGENERLRSRISQLFSKIETHLKQILREKSLREGKGFELDEAVLANLLLAVAEGRIAQFVRSEFKLKPTKHFNEQWNFIQQQLLQS.

The 61-residue stretch at 7–67 (INRREHILQC…GLIEFIEESL (61 aa)) folds into the HTH tetR-type domain. A DNA-binding region (H-T-H motif) is located at residues 30–49 (TTAKLAAEVGVSEAALYRHF). A coiled-coil region spans residues 109-136 (DALLGENERLRSRISQLFSKIETHLKQI).

The protein belongs to the nucleoid occlusion factor SlmA family. In terms of assembly, homodimer. Interacts with FtsZ.

The protein localises to the cytoplasm. Its subcellular location is the nucleoid. Required for nucleoid occlusion (NO) phenomenon, which prevents Z-ring formation and cell division over the nucleoid. Acts as a DNA-associated cell division inhibitor that binds simultaneously chromosomal DNA and FtsZ, and disrupts the assembly of FtsZ polymers. SlmA-DNA-binding sequences (SBS) are dispersed on non-Ter regions of the chromosome, preventing FtsZ polymerization at these regions. The polypeptide is Nucleoid occlusion factor SlmA (Shewanella pealeana (strain ATCC 700345 / ANG-SQ1)).